A 28-amino-acid chain; its full sequence is Endoglucanase (28 aa).

Glu-20 (nucleophile) is an active-site residue.

It belongs to the glycosyl hydrolase 5 (cellulase A) family.

The protein localises to the cell membrane. It catalyses the reaction Endohydrolysis of (1-&gt;4)-beta-D-glucosidic linkages in cellulose, lichenin and cereal beta-D-glucans.. In Schizophyllum commune (Split gill fungus), this protein is Endoglucanase.